A 185-amino-acid chain; its full sequence is MARLYVGNLDPRVTSGELEDEFRVFGVLRSVWVARKPPGFAFIDFDDKRDAEDALRDLDGKNGWRVELSRNSSSRGGRDRHGGSEMKCYECGETGHFARECRLRIGPGGLGSGKRRSRSRSRSRSPQYRKSPTYGRRSYSPRDRSPRRRSVSPVRGRSYSRSPRGRGGSPYADGRDGGRYRRSRS.

Positions 2-73 (ARLYVGNLDP…WRVELSRNSS (72 aa)) constitute an RRM domain. The CCHC-type zinc finger occupies 86 to 103 (MKCYECGETGHFARECRL). The tract at residues 104 to 185 (RIGPGGLGSG…DGGRYRRSRS (82 aa)) is disordered. Residues 113–123 (GKRRSRSRSRS) are compositionally biased toward basic residues. 2 stretches are compositionally biased toward low complexity: residues 124–138 (RSPQYRKSPTYGRRS) and 151–162 (VSPVRGRSYSRS).

The protein belongs to the splicing factor SR family. Extensively phosphorylated on serine residues in the RS domain. Expressed in roots, leaves and immature seeds.

The protein localises to the nucleus. Involved in pre-mRNA splicing. The chain is Serine/arginine-rich splicing factor RSZ21 (RSZP21) from Oryza sativa subsp. japonica (Rice).